A 342-amino-acid chain; its full sequence is MWKKLMLLLLMAIPLVSAVAIPSISATDVVLVSDNCADQCTALEVADALNATVITTEWGIYNESLIDEILALNPDKVIIIGGPLAVVENYTTALENVGITVERIGGSNRYETNANVTLRFQNQFRYAFGNNTTVCVCHGFDDIALNETMGLIKNGTCLVLLTNGVNLSVEPQKLQLRINKVEIIENPICPFCNYSKLMLKLQKNGLKIEIKQIPKVKVKLMLQNRIRIMERRILMLKRMGVNVTDLEEKLKEVEQLMEQNRYQEAYRIMVQLQEEQMVRVKLHLHPMWSKMKRGKIQENKNASHIYHQNINNLTNELNTSRGGIGGINAPHIYHQRINSTIQ.

An N-terminal signal peptide occupies residues 1-18 (MWKKLMLLLLMAIPLVSA).

This is an uncharacterized protein from Methanocaldococcus jannaschii (strain ATCC 43067 / DSM 2661 / JAL-1 / JCM 10045 / NBRC 100440) (Methanococcus jannaschii).